Reading from the N-terminus, the 158-residue chain is Small ribosomal subunit protein uS15 (158 aa).

Residues 1 to 10 are compositionally biased toward basic residues; the sequence is MARMHTRRRG. The segment at 1–66 is disordered; sequence MARMHTRRRG…EGVKGTPIPD (66 aa). Over residues 21-32 the composition is skewed to acidic residues; it reads DPPEWSDIDADA. Basic and acidic residues predominate over residues 33–45; that stretch reads IEERVVELAEQGH.

It belongs to the universal ribosomal protein uS15 family. Part of the 30S ribosomal subunit.

The polypeptide is Small ribosomal subunit protein uS15 (Haloquadratum walsbyi (strain DSM 16790 / HBSQ001)).